The following is a 252-amino-acid chain: N-acetylglucosaminyl-phosphatidylinositol de-N-acetylase (252 aa).

Residues Glu2–Trp22 traverse the membrane as a helical segment. Residues Asn23–Leu252 are Cytoplasmic-facing.

The protein belongs to the PIGL family.

It localises to the endoplasmic reticulum membrane. The enzyme catalyses a 6-(N-acetyl-alpha-D-glucosaminyl)-1-(1,2-diacyl-sn-glycero-3-phospho)-1D-myo-inositol + H2O = a 6-(alpha-D-glucosaminyl)-1-(1,2-diacyl-sn-glycero-3-phospho)-1D-myo-inositol + acetate. It functions in the pathway glycolipid biosynthesis; glycosylphosphatidylinositol-anchor biosynthesis. In terms of biological role, catalyzes the second step of glycosylphosphatidylinositol (GPI) biosynthesis, which is the de-N-acetylation of N-acetylglucosaminyl-phosphatidylinositol. The polypeptide is N-acetylglucosaminyl-phosphatidylinositol de-N-acetylase (Pigl) (Rattus norvegicus (Rat)).